A 123-amino-acid chain; its full sequence is Large ribosomal subunit protein bL17 (123 aa).

It belongs to the bacterial ribosomal protein bL17 family. As to quaternary structure, part of the 50S ribosomal subunit. Contacts protein L32.

The chain is Large ribosomal subunit protein bL17 from Borreliella burgdorferi (strain ATCC 35210 / DSM 4680 / CIP 102532 / B31) (Borrelia burgdorferi).